The sequence spans 104 residues: Large ribosomal subunit protein uL24 (104 aa).

Belongs to the universal ribosomal protein uL24 family. As to quaternary structure, part of the 50S ribosomal subunit.

Its function is as follows. One of two assembly initiator proteins, it binds directly to the 5'-end of the 23S rRNA, where it nucleates assembly of the 50S subunit. One of the proteins that surrounds the polypeptide exit tunnel on the outside of the subunit. The sequence is that of Large ribosomal subunit protein uL24 from Shewanella denitrificans (strain OS217 / ATCC BAA-1090 / DSM 15013).